The chain runs to 231 residues: Probable methylthioribulose-1-phosphate dehydratase (231 aa).

Position 82 (Cys82) interacts with substrate. Residues His100 and His102 each coordinate Zn(2+). Catalysis depends on Glu123, which acts as the Proton donor/acceptor. His181 serves as a coordination point for Zn(2+).

The protein belongs to the aldolase class II family. MtnB subfamily. Zn(2+) serves as cofactor.

The protein localises to the cytoplasm. The enzyme catalyses 5-(methylsulfanyl)-D-ribulose 1-phosphate = 5-methylsulfanyl-2,3-dioxopentyl phosphate + H2O. It functions in the pathway amino-acid biosynthesis; L-methionine biosynthesis via salvage pathway; L-methionine from S-methyl-5-thio-alpha-D-ribose 1-phosphate: step 2/6. Its function is as follows. Catalyzes the dehydration of methylthioribulose-1-phosphate (MTRu-1-P) into 2,3-diketo-5-methylthiopentyl-1-phosphate (DK-MTP-1-P). The sequence is that of Probable methylthioribulose-1-phosphate dehydratase from Dictyostelium discoideum (Social amoeba).